The primary structure comprises 180 residues: Cell division protein SepF (180 aa).

The disordered stretch occupies residues 1–66; that stretch reads MAFSFKSFFG…NRNGFAYDNG (66 aa). Over residues 12-23 the composition is skewed to acidic residues; that stretch reads ADDEEEEYEDSG. Over residues 24-57 the composition is skewed to low complexity; sequence YEQQPNQGQQQPVNSQQQNTSNQSYSGYNNQNQN.

This sequence belongs to the SepF family. As to quaternary structure, homodimer. Interacts with FtsZ.

The protein resides in the cytoplasm. In terms of biological role, cell division protein that is part of the divisome complex and is recruited early to the Z-ring. Probably stimulates Z-ring formation, perhaps through the cross-linking of FtsZ protofilaments. Its function overlaps with FtsA. The chain is Cell division protein SepF from Oenococcus oeni (strain ATCC BAA-331 / PSU-1).